The sequence spans 101 residues: Small ribosomal subunit protein bS18c (101 aa).

The span at methionine 1 to leucine 19 shows a compositional bias: basic residues. Residues methionine 1–glycine 23 form a disordered region.

This sequence belongs to the bacterial ribosomal protein bS18 family. Part of the 30S ribosomal subunit.

It is found in the plastid. The protein localises to the chloroplast. The protein is Small ribosomal subunit protein bS18c of Liriodendron tulipifera (Tuliptree).